The sequence spans 115 residues: U3-lycotoxin-Ls1i (115 aa).

The N-terminal stretch at 1 to 20 (MKFVLLFGVFLVTLFSYSSA) is a signal peptide. Positions 21–44 (EMLDDFDQADEDELLSLIEKEEAR) are excised as a propeptide. 4 disulfides stabilise this stretch: Cys48–Cys63, Cys55–Cys72, Cys62–Cys87, and Cys74–Cys85.

It belongs to the neurotoxin 19 (CSTX) family. 01 subfamily. In terms of tissue distribution, expressed by the venom gland.

Its subcellular location is the secreted. This is U3-lycotoxin-Ls1i from Lycosa singoriensis (Wolf spider).